An 89-amino-acid chain; its full sequence is Small ribosomal subunit protein uS15 (89 aa).

The protein belongs to the universal ribosomal protein uS15 family. Part of the 30S ribosomal subunit. Forms a bridge to the 50S subunit in the 70S ribosome, contacting the 23S rRNA.

One of the primary rRNA binding proteins, it binds directly to 16S rRNA where it helps nucleate assembly of the platform of the 30S subunit by binding and bridging several RNA helices of the 16S rRNA. Functionally, forms an intersubunit bridge (bridge B4) with the 23S rRNA of the 50S subunit in the ribosome. In Marinomonas sp. (strain MWYL1), this protein is Small ribosomal subunit protein uS15.